Reading from the N-terminus, the 219-residue chain is Poxin (219 aa).

Catalysis depends on histidine 17, which acts as the Proton donor. The active-site Shared with catalytic histidine of dimeric partner is tyrosine 138. Catalysis depends on lysine 142, which acts as the Proton acceptor; shared with catalytic histidine of dimeric partner.

The protein belongs to the poxin family. In terms of assembly, homodimer.

The enzyme catalyses 2',3'-cGAMP + H2O = Gp(2'-5')Ap(3') + H(+). Functionally, nuclease that is responsible for viral evasion of host cGAS-STING innate immunity. Cleaves 2',3'-cGAMP which is produced by host cGAS following recognition of cytosolic DNA and blocks the subsequent 2',3'-cGAMP-mediated activation of TMEM173/STING, which normally spreads to adjacent cells and activates the interferon and NF-kappa-B immune responses. This Homo sapiens (Human) protein is Poxin (OPG188).